Here is a 351-residue protein sequence, read N- to C-terminus: Photosystem II D2 protein (351 aa).

Residues 39–59 (CSYLALGGWLTGTTFVTSWYT) traverse the membrane as a helical segment. Position 116 (His116) interacts with chlorophyll a. A helical transmembrane segment spans residues 123 to 139 (GFCLRQFEIARLVGIRP). The pheophytin a site is built by Gln128 and Asn141. Residues 151–164 (VFVSVFLMYPLGQA) form a helical membrane-spanning segment. His196 is a chlorophyll a binding site. The chain crosses the membrane as a helical span at residues 206-226 (GALLCAIHGATVQNTLFEDGD). A plastoquinone is bound by residues His213 and Phe260. His213 lines the Fe cation pocket. Residue His267 participates in Fe cation binding. A helical membrane pass occupies residues 277–293 (GLWTSAFGIVGLALNLR).

The protein belongs to the reaction center PufL/M/PsbA/D family. In terms of assembly, PSII is composed of 1 copy each of membrane proteins PsbA, PsbB, PsbC, PsbD, PsbE, PsbF, PsbH, PsbI, PsbJ, PsbK, PsbL, PsbM, PsbT, PsbX, PsbY, PsbZ, Psb30/Ycf12, at least 3 peripheral proteins of the oxygen-evolving complex and a large number of cofactors. It forms dimeric complexes. The D1/D2 heterodimer binds P680, chlorophylls that are the primary electron donor of PSII, and subsequent electron acceptors. It shares a non-heme iron and each subunit binds pheophytin, quinone, additional chlorophylls, carotenoids and lipids. There is also a Cl(-1) ion associated with D1 and D2, which is required for oxygen evolution. The PSII complex binds additional chlorophylls, carotenoids and specific lipids. is required as a cofactor.

The protein localises to the plastid. It localises to the chloroplast thylakoid membrane. The enzyme catalyses 2 a plastoquinone + 4 hnu + 2 H2O = 2 a plastoquinol + O2. Functionally, photosystem II (PSII) is a light-driven water:plastoquinone oxidoreductase that uses light energy to abstract electrons from H(2)O, generating O(2) and a proton gradient subsequently used for ATP formation. It consists of a core antenna complex that captures photons, and an electron transfer chain that converts photonic excitation into a charge separation. The D1/D2 (PsbA/PsbD) reaction center heterodimer binds P680, the primary electron donor of PSII as well as several subsequent electron acceptors. D2 is needed for assembly of a stable PSII complex. This chain is Photosystem II D2 protein, found in Gracilaria tenuistipitata var. liui (Red alga).